We begin with the raw amino-acid sequence, 815 residues long: Glycogen phosphorylase (815 aa).

Position 662 is an N6-(pyridoxal phosphate)lysine (Lys-662).

Belongs to the glycogen phosphorylase family. Pyridoxal 5'-phosphate is required as a cofactor.

The catalysed reaction is [(1-&gt;4)-alpha-D-glucosyl](n) + phosphate = [(1-&gt;4)-alpha-D-glucosyl](n-1) + alpha-D-glucose 1-phosphate. Functionally, phosphorylase is an important allosteric enzyme in carbohydrate metabolism. Enzymes from different sources differ in their regulatory mechanisms and in their natural substrates. However, all known phosphorylases share catalytic and structural properties. The chain is Glycogen phosphorylase (glgP) from Shigella flexneri.